We begin with the raw amino-acid sequence, 345 residues long: MGLSIGIVGATGQVGQVMRTLLDERDFPASAVRFFASARSQGRKLAFRGQEIEVEDAETADPSGLDIALFSAGSAMSKVQAPRFAAAGVTVIDNSSAWRKDPDVPLVVSEVNFERDAHRRPKGIIANPNCTTMAAMPVLKVLHDEARLVRLVVSSYQAVSGSGLAGVAELAEQARAVIGGAEQLVYDGGALEFPPPNTYVAPIAFNVVPLAGSLVDDGSGETDEDQKLRFESRKILGIPDLLVSGTCVRVPVFTGHSLSINAEFAQPLSPERARELLDGATGVQLVDVPTPLAAAGVDESLVGRIRRDPGVPDGRGLALFVSGDNLRKGAALNTIQIAELLTADL.

NADP(+) contacts are provided by residues 11–14 (TGQV) and 39–40 (RS). Arg99 serves as a coordination point for phosphate. The active-site Acyl-thioester intermediate is the Cys130. Gln157 lines the substrate pocket. Residue 160–161 (SG) coordinates NADP(+). Phosphate is bound at residue Lys227. Residue Arg249 coordinates substrate. Residue His256 is the Proton acceptor of the active site. Asn325 contacts NADP(+).

It belongs to the aspartate-semialdehyde dehydrogenase family. As to quaternary structure, homodimer.

It catalyses the reaction L-aspartate 4-semialdehyde + phosphate + NADP(+) = 4-phospho-L-aspartate + NADPH + H(+). It participates in amino-acid biosynthesis; L-lysine biosynthesis via DAP pathway; (S)-tetrahydrodipicolinate from L-aspartate: step 2/4. Its pathway is amino-acid biosynthesis; L-methionine biosynthesis via de novo pathway; L-homoserine from L-aspartate: step 2/3. It functions in the pathway amino-acid biosynthesis; L-threonine biosynthesis; L-threonine from L-aspartate: step 2/5. Catalyzes the NADPH-dependent formation of L-aspartate-semialdehyde (L-ASA) by the reductive dephosphorylation of L-aspartyl-4-phosphate. The polypeptide is Aspartate-semialdehyde dehydrogenase (Mycobacterium bovis (strain ATCC BAA-935 / AF2122/97)).